The primary structure comprises 216 residues: Probable flavin-dependent thymidylate synthase (216 aa).

The 216-residue stretch at 1-216 (MSAKLISVTK…PSIAKALDWV (216 aa)) folds into the ThyX domain. FAD-binding positions include S55, 78–80 (RHR), and E86. DUMP is bound by residues 75-78 (QVLR), 86-90 (EFSQR), and R155. The short motif at 78 to 88 (RHRSFHFQEFS) is the ThyX motif element. FAD is bound at residue H177. R182 serves as a coordination point for dUMP. R182 acts as the Involved in ionization of N3 of dUMP, leading to its activation in catalysis.

This sequence belongs to the thymidylate synthase ThyX family. As to quaternary structure, homotetramer. FAD is required as a cofactor.

It carries out the reaction dUMP + (6R)-5,10-methylene-5,6,7,8-tetrahydrofolate + NADPH + H(+) = dTMP + (6S)-5,6,7,8-tetrahydrofolate + NADP(+). Its pathway is pyrimidine metabolism; dTTP biosynthesis. Its function is as follows. Catalyzes the reductive methylation of 2'-deoxyuridine-5'-monophosphate (dUMP) to 2'-deoxythymidine-5'-monophosphate (dTMP) while utilizing 5,10-methylenetetrahydrofolate (mTHF) as the methyl donor, and NADPH and FADH(2) as the reductant. The chain is Probable flavin-dependent thymidylate synthase from Paramecium bursaria Chlorella virus 1 (PBCV-1).